Consider the following 23-residue polypeptide: M-myrmeciitoxin-Mp2b (23 aa).

Glutamine 23 bears the Glutamine amide mark.

This sequence belongs to the formicidae venom precursor-01 superfamily. Ant pilosulin family. Heterodimer with M-MIITX-Mp2a (pilosulin-3a) (AC Q26464); disulfide-linked. Only heterodimers (and not monomers) have been identified in the venom. As to expression, expressed by the venom gland.

It is found in the secreted. Heterodimer protein that may serve both defensive (pain-inducing) and predatory (insecticidal) roles. Has membrane-disrupting activity and shows induction of non-specific calcium influx into cells,. Shows broad-spectrum activity against a diverse range of bacteria, and cell lines, as well as hemolytic activity (EC(50)=2.18 uM). In vivo, shows moderate insecticidal activity against D.melanogaster and potent anthelmintic activity against the veterinary nematode H.contortus. In addition, intraplantar injection into mice induces nocifensive behavior and mechanical allodynia. The protein is M-myrmeciitoxin-Mp2b of Myrmecia pilosula (Jack jumper ant).